The primary structure comprises 321 residues: Ubiquitin-conjugating enzyme E2 U (321 aa).

One can recognise a UBC core domain in the interval 4–153 (RAYLLLHRDF…LRLFNRPLQM (150 aa)). C89 acts as the Glycyl thioester intermediate in catalysis. The tract at residues 285 to 321 (WKSDTSLYENDTDEPREEEVEDLISWTNTLNTNTSED) is disordered. Over residues 294–306 (NDTDEPREEEVED) the composition is skewed to acidic residues. Positions 309-321 (SWTNTLNTNTSED) are enriched in polar residues.

It belongs to the ubiquitin-conjugating enzyme family. Post-translationally, autoubiquitinated in vitro in the presence of UBR5.

The catalysed reaction is S-ubiquitinyl-[E1 ubiquitin-activating enzyme]-L-cysteine + [E2 ubiquitin-conjugating enzyme]-L-cysteine = [E1 ubiquitin-activating enzyme]-L-cysteine + S-ubiquitinyl-[E2 ubiquitin-conjugating enzyme]-L-cysteine.. The protein operates within protein modification; protein ubiquitination. Catalyzes the covalent attachment of ubiquitin to other proteins. This chain is Ubiquitin-conjugating enzyme E2 U (UBE2U), found in Homo sapiens (Human).